Consider the following 160-residue polypeptide: Crossover junction endodeoxyribonuclease RuvC (160 aa).

Active-site residues include aspartate 9, glutamate 68, and aspartate 141. Aspartate 9, glutamate 68, and aspartate 141 together coordinate Mg(2+).

This sequence belongs to the RuvC family. In terms of assembly, homodimer which binds Holliday junction (HJ) DNA. The HJ becomes 2-fold symmetrical on binding to RuvC with unstacked arms; it has a different conformation from HJ DNA in complex with RuvA. In the full resolvosome a probable DNA-RuvA(4)-RuvB(12)-RuvC(2) complex forms which resolves the HJ. It depends on Mg(2+) as a cofactor.

It localises to the cytoplasm. It carries out the reaction Endonucleolytic cleavage at a junction such as a reciprocal single-stranded crossover between two homologous DNA duplexes (Holliday junction).. The RuvA-RuvB-RuvC complex processes Holliday junction (HJ) DNA during genetic recombination and DNA repair. Endonuclease that resolves HJ intermediates. Cleaves cruciform DNA by making single-stranded nicks across the HJ at symmetrical positions within the homologous arms, yielding a 5'-phosphate and a 3'-hydroxyl group; requires a central core of homology in the junction. The consensus cleavage sequence is 5'-(A/T)TT(C/G)-3'. Cleavage occurs on the 3'-side of the TT dinucleotide at the point of strand exchange. HJ branch migration catalyzed by RuvA-RuvB allows RuvC to scan DNA until it finds its consensus sequence, where it cleaves and resolves the cruciform DNA. The chain is Crossover junction endodeoxyribonuclease RuvC from Campylobacter jejuni subsp. jejuni serotype O:2 (strain ATCC 700819 / NCTC 11168).